A 292-amino-acid polypeptide reads, in one-letter code: Tetratricopeptide repeat protein 1 (292 aa).

Residues 23–125 (TQEAECAGPP…STRLKEEGNE (103 aa)) form a disordered region. 2 stretches are compositionally biased toward basic and acidic residues: residues 45–55 (LLRDDEAHLQE) and 75–85 (GADKVENKSNE). Phosphoserine occurs at positions 83 and 90. Residues 99-125 (ELEKNMSDEEKQKRREESTRLKEEGNE) show a composition bias toward basic and acidic residues. TPR repeat units follow at residues 116-149 (STRL…CPSC), 155-188 (SILF…NPSY), and 189-222 (IRAI…DPSI).

In terms of assembly, interacts with the GAP domain of NF1. Interacts (via TPR repeats) with HSP90AA1 and HSPA8.

The sequence is that of Tetratricopeptide repeat protein 1 (TTC1) from Homo sapiens (Human).